The following is a 366-amino-acid chain: 3-dehydroquinate synthase (366 aa).

NAD(+) is bound by residues 71 to 76, 105 to 109, 129 to 130, lysine 142, lysine 151, and 169 to 172; these read DGEKYK, GVIGD, TT, and TLQT. Zn(2+)-binding residues include glutamate 184, histidine 247, and histidine 264.

This sequence belongs to the sugar phosphate cyclases superfamily. Dehydroquinate synthase family. Requires Co(2+) as cofactor. It depends on Zn(2+) as a cofactor. NAD(+) serves as cofactor.

It localises to the cytoplasm. It catalyses the reaction 7-phospho-2-dehydro-3-deoxy-D-arabino-heptonate = 3-dehydroquinate + phosphate. It participates in metabolic intermediate biosynthesis; chorismate biosynthesis; chorismate from D-erythrose 4-phosphate and phosphoenolpyruvate: step 2/7. In terms of biological role, catalyzes the conversion of 3-deoxy-D-arabino-heptulosonate 7-phosphate (DAHP) to dehydroquinate (DHQ). The polypeptide is 3-dehydroquinate synthase (Actinobacillus pleuropneumoniae serotype 5b (strain L20)).